The following is a 153-amino-acid chain: UPF0260 protein YcgN (153 aa).

It belongs to the UPF0260 family.

This Escherichia coli O6:K15:H31 (strain 536 / UPEC) protein is UPF0260 protein YcgN.